Here is a 689-residue protein sequence, read N- to C-terminus: Armadillo-like helical domain-containing protein 3 (689 aa).

A helical membrane pass occupies residues 520 to 538 (IFQLALQVVNLFNMFITYG).

It belongs to the ARMH3 family.

The protein resides in the golgi apparatus membrane. Its subcellular location is the cytoplasm. May be involved in Golgi maintenance and protein secretion. The polypeptide is Armadillo-like helical domain-containing protein 3 (Danio rerio (Zebrafish)).